The primary structure comprises 229 residues: All-trans retinoic acid-induced differentiation factor (229 aa).

The N-terminal stretch at 1 to 30 (MAPHDPGSLTTLVPWAAALLLALGVERALA) is a signal peptide. Over 31-199 (LPEICTQCPG…YKCMRQGSFS (169 aa)) the chain is Extracellular. 4 N-linked (GlcNAc...) asparagine glycosylation sites follow: asparagine 44, asparagine 79, asparagine 157, and asparagine 168. An EGF-like domain is found at 152–193 (QKNLCNNTGDPEMCPENGSCVPDGPGLLQCVCADGFHGYKCM). 3 disulfide bridges follow: cysteine 156/cysteine 171, cysteine 165/cysteine 181, and cysteine 183/cysteine 192. A helical membrane pass occupies residues 200 to 220 (LLMFFGILGATTLSVSILLWA). Over 221–229 (TQRRKAKTS) the chain is Cytoplasmic.

In terms of assembly, interacts with NELL1; the interaction promotes osteoblastic differentiation and mineralization. Interacts with SLC37A3; the interaction is direct and both proteins are mutually dependent for their stability. In terms of tissue distribution, weakly expressed in hematopoietic cell lines.

Its subcellular location is the nucleus envelope. It localises to the cell membrane. The protein localises to the lysosome membrane. Its function is as follows. Promotes osteoblast cell differentiation and terminal mineralization. Plays a role in inducing the cell cycle arrest via inhibiting CCND1 expression in all-trans-retinoic acid (ATRA) signal pathway. In osteoclasts, forms a transporter complex with ATRAID for nitrogen-containing-bisphophonates (N-BPs) required for releasing N-BP molecules that have trafficked to lysosomes through fluid-phase endocytosis into the cytosol. In Homo sapiens (Human), this protein is All-trans retinoic acid-induced differentiation factor.